Consider the following 481-residue polypeptide: Betaine aldehyde dehydrogenase 2 (481 aa).

Residues S29 and D96 each contribute to the K(+) site. An NAD(+)-binding site is contributed by 152–154; that stretch reads GAW. K164 acts as the Charge relay system in catalysis. 178 to 181 serves as a coordination point for NAD(+); sequence KPSE. V182 provides a ligand contact to K(+). 231–234 serves as a coordination point for NAD(+); that stretch reads SVKT. I246 contributes to the K(+) binding site. E252 acts as the Proton acceptor in catalysis. Residues G254, C286, and E383 each contribute to the NAD(+) site. Residue C286 is the Nucleophile of the active site. C286 is modified (cysteine sulfenic acid (-SOH)). K(+)-binding residues include K453 and G456. The active-site Charge relay system is E460.

This sequence belongs to the aldehyde dehydrogenase family. In terms of assembly, dimer of dimers. The cofactor is K(+).

It catalyses the reaction betaine aldehyde + NAD(+) + H2O = glycine betaine + NADH + 2 H(+). It functions in the pathway amine and polyamine biosynthesis; betaine biosynthesis via choline pathway; betaine from betaine aldehyde: step 1/1. In terms of biological role, involved in the biosynthesis of the osmoprotectant glycine betaine. Catalyzes the irreversible oxidation of betaine aldehyde to the corresponding acid. This is Betaine aldehyde dehydrogenase 2 from Rhizobium meliloti (strain 1021) (Ensifer meliloti).